We begin with the raw amino-acid sequence, 202 residues long: Small ribosomal subunit protein uS4c (202 aa).

An S4 RNA-binding domain is found at 90–152 (MRLDNLIFRL…AASKSLVNTY (63 aa)).

The protein belongs to the universal ribosomal protein uS4 family. Part of the 30S ribosomal subunit. Contacts protein S5. The interaction surface between S4 and S5 is involved in control of translational fidelity.

It is found in the plastid. The protein resides in the chloroplast. One of the primary rRNA binding proteins, it binds directly to 16S rRNA where it nucleates assembly of the body of the 30S subunit. Functionally, with S5 and S12 plays an important role in translational accuracy. In Emiliania huxleyi (Coccolithophore), this protein is Small ribosomal subunit protein uS4c (rps4).